The chain runs to 273 residues: MHDANIRVAIAGAGGRMGRQLIQAALGLEGVQLGAALEREGSSLLGSDAGELAGAGKTGVTVQSSLDAVKDDFDVFIDFTRPEGTLNHLAFCRQHGKGMVIGTTGFDDAGKQAIGEAAKDIAIVFAANFSVGVNVMLKLLEKAAKVMGDYTDIEIIEAHHRHKVDAPSGTALAMGEAIAHALDKDLKDCAVYSREGHTGERVPGTIGFATVRAGDIVGEHTAMFADIGERLEITHKASSRMTFANGAVRSALWLKGKDKGLFDMKDVLNLNYL.

NAD(+) is bound by residues 12–17 (GAGGRM) and Glu-38. Arg-39 contributes to the NADP(+) binding site. NAD(+) is bound by residues 102–104 (GTT) and 126–129 (AANF). The Proton donor/acceptor role is filled by His-159. Residue His-160 participates in (S)-2,3,4,5-tetrahydrodipicolinate binding. Lys-163 serves as the catalytic Proton donor. 169–170 (GT) contributes to the (S)-2,3,4,5-tetrahydrodipicolinate binding site.

The protein belongs to the DapB family. In terms of assembly, homotetramer.

The protein resides in the cytoplasm. The enzyme catalyses (S)-2,3,4,5-tetrahydrodipicolinate + NAD(+) + H2O = (2S,4S)-4-hydroxy-2,3,4,5-tetrahydrodipicolinate + NADH + H(+). It catalyses the reaction (S)-2,3,4,5-tetrahydrodipicolinate + NADP(+) + H2O = (2S,4S)-4-hydroxy-2,3,4,5-tetrahydrodipicolinate + NADPH + H(+). Its pathway is amino-acid biosynthesis; L-lysine biosynthesis via DAP pathway; (S)-tetrahydrodipicolinate from L-aspartate: step 4/4. Catalyzes the conversion of 4-hydroxy-tetrahydrodipicolinate (HTPA) to tetrahydrodipicolinate. This Escherichia fergusonii (strain ATCC 35469 / DSM 13698 / CCUG 18766 / IAM 14443 / JCM 21226 / LMG 7866 / NBRC 102419 / NCTC 12128 / CDC 0568-73) protein is 4-hydroxy-tetrahydrodipicolinate reductase.